Reading from the N-terminus, the 228-residue chain is Cutinase CUT1 (228 aa).

An N-terminal signal peptide occupies residues 1-16; it reads MQFITVALTLIALASA. A disulfide bond links C49 and C127. S138 serves as the catalytic Nucleophile. A disulfide bridge connects residues C189 and C196. N-linked (GlcNAc...) asparagine glycosylation occurs at N190. The active site involves D193. The active-site Proton donor/acceptor is the H206.

Belongs to the cutinase family. Post-translationally, the 2 disulfide bonds play a critical role in holding the catalytic residues in juxta-position; reduction of the disulfide bridges results in the complete inactivation of the enzyme.

It localises to the secreted. The catalysed reaction is cutin + H2O = cutin monomers.. Its function is as follows. Catalyzes the hydrolysis of complex carboxylic polyesters found in the cell wall of plants. Degrades cutin, a macromolecule that forms the structure of the plant cuticle. Required for efficient penetration of the host plant cuticle by the appressorium during the initial stage of fungal infection. This Pyricularia oryzae (strain 70-15 / ATCC MYA-4617 / FGSC 8958) (Rice blast fungus) protein is Cutinase CUT1.